Consider the following 199-residue polypeptide: 7-methyl-GTP pyrophosphatase (199 aa).

Residue D74 is the Proton acceptor of the active site.

The protein belongs to the Maf family. YceF subfamily. A divalent metal cation serves as cofactor.

It localises to the cytoplasm. It carries out the reaction N(7)-methyl-GTP + H2O = N(7)-methyl-GMP + diphosphate + H(+). Nucleoside triphosphate pyrophosphatase that hydrolyzes 7-methyl-GTP (m(7)GTP). May have a dual role in cell division arrest and in preventing the incorporation of modified nucleotides into cellular nucleic acids. The sequence is that of 7-methyl-GTP pyrophosphatase from Albidiferax ferrireducens (strain ATCC BAA-621 / DSM 15236 / T118) (Rhodoferax ferrireducens).